Reading from the N-terminus, the 648-residue chain is Mitochondrial Rho GTPase 1 (648 aa).

Residues 1-619 (MARYAAGAVD…KHYNRLINRS (619 aa)) are Cytoplasmic-facing. Serine 14 is modified (phosphoserine). Positions 15–182 (PKSVRIVVVG…FYYAQKTVLH (168 aa)) constitute a Miro 1 domain. 2 consecutive EF-hand domains span residues 198-233 (RCVRALKRIFILCDHDRDGALSEAELNDFQVKCFHA) and 319-354 (AAIDFLKGMYMLFDDDQDNNLRPQEIEDLFSTAPES). Residues aspartate 211, aspartate 213, aspartate 215, glutamate 222, aspartate 332, aspartate 334, aspartate 336, asparagine 338, and glutamate 343 each coordinate Ca(2+). In terms of domain architecture, Miro 2 spans 427–595 (RKVFQCFVFG…FRKILTAAQH (169 aa)). A helical transmembrane segment spans residues 620–640 (LMAVSIGAAAVVVGLAAYRVY). The Mitochondrial intermembrane portion of the chain corresponds to 641 to 648 (ATRKSSSA).

The protein belongs to the mitochondrial Rho GTPase family. As to expression, expressed in roots, leaves, stems, flowers and siliques.

Its subcellular location is the mitochondrion outer membrane. Functionally, mitochondrial GTPase required to maintain proper development, morphology and intracellular distribution of mitochondria, which in turn are essential for the progress of embryonic cell division, development of haploid male and female gametes, and pollen tube growth. The chain is Mitochondrial Rho GTPase 1 from Arabidopsis thaliana (Mouse-ear cress).